Reading from the N-terminus, the 100-residue chain is Integration host factor subunit alpha (100 aa).

It belongs to the bacterial histone-like protein family. As to quaternary structure, heterodimer of an alpha and a beta chain.

Functionally, this protein is one of the two subunits of integration host factor, a specific DNA-binding protein that functions in genetic recombination as well as in transcriptional and translational control. The protein is Integration host factor subunit alpha of Methylobacillus flagellatus (strain ATCC 51484 / DSM 6875 / VKM B-1610 / KT).